A 306-amino-acid chain; its full sequence is Porphobilinogen deaminase (306 aa).

Position 239 is an S-(dipyrrolylmethanemethyl)cysteine (Cys239).

It belongs to the HMBS family. Monomer. Dipyrromethane is required as a cofactor.

The enzyme catalyses 4 porphobilinogen + H2O = hydroxymethylbilane + 4 NH4(+). It functions in the pathway porphyrin-containing compound metabolism; protoporphyrin-IX biosynthesis; coproporphyrinogen-III from 5-aminolevulinate: step 2/4. Functionally, tetrapolymerization of the monopyrrole PBG into the hydroxymethylbilane pre-uroporphyrinogen in several discrete steps. This is Porphobilinogen deaminase from Helicobacter pylori (strain HPAG1).